The primary structure comprises 122 residues: uncharacterized protein (122 aa).

The N-terminal stretch at 1-22 (MNMMRIFYIGLSGVGMMFSSMA) is a signal peptide.

This is an uncharacterized protein from Escherichia coli (strain K12).